The sequence spans 360 residues: Tryptophan--tRNA ligase, mitochondrial (360 aa).

Residues 1–18 (MALHSMRKARERWSFIRA) constitute a mitochondrion transit peptide. Residues Q42 and 48 to 51 (HLGN) contribute to the ATP site. D167 contributes to the L-tryptophan binding site. ATP is bound by residues 179-181 (GED), V217, and 226-230 (KMSKS).

The protein belongs to the class-I aminoacyl-tRNA synthetase family. As to expression, brain.

It is found in the mitochondrion matrix. The protein localises to the mitochondrion. It catalyses the reaction tRNA(Trp) + L-tryptophan + ATP = L-tryptophyl-tRNA(Trp) + AMP + diphosphate + H(+). Its function is as follows. Catalyzes the attachment of tryptophan to tRNA(Trp) in a two-step reaction: tryptophan is first activated by ATP to form Trp-AMP and then transferred to the acceptor end of tRNA(Trp). The polypeptide is Tryptophan--tRNA ligase, mitochondrial (WARS2) (Homo sapiens (Human)).